The following is a 176-amino-acid chain: MTKSYEMVYILRPDLLEEQVQQEINRYRDFLTENEAQEVQIKYWGKRRLAYPIKKLQDGFYVQMNYQGDGKQIAPLERMMRLSDEVIRYLTIKLDKDQYTPNDSPPPEGIIDTPKPVIEPPKPAVESPKPAETTEETAEAVETVEPPAEPAEPVEAVETVDTTEETVEPVDTTSEE.

Residues 97–176 (DQYTPNDSPP…VEPVDTTSEE (80 aa)) form a disordered region. Positions 140–160 (AVETVEPPAEPAEPVEAVETV) are enriched in low complexity. Over residues 161–176 (DTTEETVEPVDTTSEE) the composition is skewed to acidic residues.

This sequence belongs to the bacterial ribosomal protein bS6 family.

Functionally, binds together with bS18 to 16S ribosomal RNA. The protein is Small ribosomal subunit protein bS6 of Gloeothece citriformis (strain PCC 7424) (Cyanothece sp. (strain PCC 7424)).